Reading from the N-terminus, the 348-residue chain is UDP-3-O-acylglucosamine N-acyltransferase (348 aa).

Histidine 241 (proton acceptor) is an active-site residue.

Belongs to the transferase hexapeptide repeat family. LpxD subfamily. Homotrimer.

It catalyses the reaction a UDP-3-O-[(3R)-3-hydroxyacyl]-alpha-D-glucosamine + a (3R)-hydroxyacyl-[ACP] = a UDP-2-N,3-O-bis[(3R)-3-hydroxyacyl]-alpha-D-glucosamine + holo-[ACP] + H(+). Its pathway is bacterial outer membrane biogenesis; LPS lipid A biosynthesis. Catalyzes the N-acylation of UDP-3-O-acylglucosamine using 3-hydroxyacyl-ACP as the acyl donor. Is involved in the biosynthesis of lipid A, a phosphorylated glycolipid that anchors the lipopolysaccharide to the outer membrane of the cell. This Neisseria meningitidis serogroup C (strain 053442) protein is UDP-3-O-acylglucosamine N-acyltransferase.